A 1291-amino-acid polypeptide reads, in one-letter code: Vigilin 1 (1291 aa).

Over residues 1–39 the composition is skewed to polar residues; the sequence is MEHLSNLEQPTTMDSYDFQKLTNDENLQGTESQVPSGSK. Disordered regions lie at residues 1-45 and 70-91; these read MEHL…STNG and HENA…KPAI. The segment covering 73-88 has biased composition (low complexity); the sequence is AQQGKKQNNSKSFSKK. Serine 115 is modified (phosphoserine). The segment at 124–148 is disordered; it reads TSVAGSDSVSRDKIPFSASSRASST. 12 KH domains span residues 166 to 229, 236 to 328, 339 to 405, 416 to 486, 575 to 644, 658 to 726, 741 to 798, 808 to 883, 894 to 957, 967 to 1040, 1050 to 1114, and 1219 to 1280; these read ILSP…RRQI, RETK…QKDI, TTVR…ALYL, TIPT…NSTI, SKFY…LADL, IVSE…VSEI, SHVE…AARI, DTIL…KQEL, AYTS…IKEI, LVEK…ETRL, QVEE…KEMI, and NCIA…KDLI. Residues 266 to 303 form a disordered region; it reads TSTRIQIPKRNNTANESSDDAKKPEKEENSAASTLDDL. Residues 268 to 281 are compositionally biased toward polar residues; it reads TRIQIPKRNNTANE. Positions 284-294 are enriched in basic and acidic residues; it reads DDAKKPEKEEN. A disordered region spans residues 845–865; that stretch reads PREDDSSNSTGNELMKPTSPD. At serine 934 the chain carries Phosphoserine. At threonine 935 the chain carries Phosphothreonine.

The protein localises to the endoplasmic reticulum. It localises to the cytoplasm. Its function is as follows. Required for cell survival under thermal stress. In Schizosaccharomyces pombe (strain 972 / ATCC 24843) (Fission yeast), this protein is Vigilin 1 (vgl1).